A 244-amino-acid chain; its full sequence is Phosphoadenosine 5'-phosphosulfate reductase (244 aa).

Cys-239 acts as the Nucleophile; cysteine thiosulfonate intermediate in catalysis.

The protein belongs to the PAPS reductase family. CysH subfamily.

Its subcellular location is the cytoplasm. The enzyme catalyses [thioredoxin]-disulfide + sulfite + adenosine 3',5'-bisphosphate + 2 H(+) = [thioredoxin]-dithiol + 3'-phosphoadenylyl sulfate. Its pathway is sulfur metabolism; hydrogen sulfide biosynthesis; sulfite from sulfate: step 3/3. Functionally, catalyzes the formation of sulfite from phosphoadenosine 5'-phosphosulfate (PAPS) using thioredoxin as an electron donor. This Escherichia coli (strain K12 / MC4100 / BW2952) protein is Phosphoadenosine 5'-phosphosulfate reductase.